Consider the following 461-residue polypeptide: Photosystem II CP43 reaction center protein (461 aa).

5 helical membrane passes run 57–81, 122–143, 166–188, 243–263, and 279–300; these read LFEV…SHLA, LRGP…KDKN, KAMF…RIIS, KPFG…LSYS, and WYNN…ASQS. Glutamate 355 serves as a coordination point for [CaMn4O5] cluster. A helical transmembrane segment spans residues 435–459; sequence RARAAAAGFEKGIDRATEPVLAMRD.

Belongs to the PsbB/PsbC family. PsbC subfamily. PSII is composed of 1 copy each of membrane proteins PsbA, PsbB, PsbC, PsbD, PsbE, PsbF, PsbH, PsbI, PsbJ, PsbK, PsbL, PsbM, PsbT, PsbX, PsbY, PsbZ, Psb30/Ycf12, peripheral proteins PsbO, CyanoQ (PsbQ), PsbU, PsbV and a large number of cofactors. It forms dimeric complexes. Binds multiple chlorophylls and provides some of the ligands for the Ca-4Mn-5O cluster of the oxygen-evolving complex. It may also provide a ligand for a Cl- that is required for oxygen evolution. PSII binds additional chlorophylls, carotenoids and specific lipids. is required as a cofactor.

It is found in the cellular thylakoid membrane. In terms of biological role, one of the components of the core complex of photosystem II (PSII). It binds chlorophyll and helps catalyze the primary light-induced photochemical processes of PSII. PSII is a light-driven water:plastoquinone oxidoreductase, using light energy to abstract electrons from H(2)O, generating O(2) and a proton gradient subsequently used for ATP formation. This Synechococcus elongatus (strain ATCC 33912 / PCC 7942 / FACHB-805) (Anacystis nidulans R2) protein is Photosystem II CP43 reaction center protein.